The chain runs to 341 residues: Ferrochelatase (341 aa).

2 residues coordinate Fe cation: H189 and E293.

Belongs to the ferrochelatase family.

The protein localises to the cytoplasm. The enzyme catalyses heme b + 2 H(+) = protoporphyrin IX + Fe(2+). It functions in the pathway porphyrin-containing compound metabolism; protoheme biosynthesis; protoheme from protoporphyrin-IX: step 1/1. Catalyzes the ferrous insertion into protoporphyrin IX. This chain is Ferrochelatase, found in Pseudomonas fluorescens (strain Pf0-1).